A 448-amino-acid polypeptide reads, in one-letter code: Chromosomal replication initiator protein DnaA (448 aa).

Residues 1 to 85 (MHDNLPQIWE…EVHIVVPSEE (85 aa)) form a domain I, interacts with DnaA modulators region. Positions 85-110 (ERVGDTQNINARRSNAQSPIMGNSPL) are domain II. Residues 111–327 (ILNPKYTFDT…GALIRIVAYS (217 aa)) are domain III, AAA+ region. ATP contacts are provided by Gly-155, Gly-157, Lys-158, and Thr-159. The segment at 328-448 (SLTNSEVTVE…DAIIKELKSD (121 aa)) is domain IV, binds dsDNA.

Belongs to the DnaA family. As to quaternary structure, oligomerizes as a right-handed, spiral filament on DNA at oriC.

It localises to the cytoplasm. Functionally, plays an essential role in the initiation and regulation of chromosomal replication. ATP-DnaA binds to the origin of replication (oriC) to initiate formation of the DNA replication initiation complex once per cell cycle. Binds the DnaA box (a 9 base pair repeat at the origin) and separates the double-stranded (ds)DNA. Forms a right-handed helical filament on oriC DNA; dsDNA binds to the exterior of the filament while single-stranded (ss)DNA is stabiized in the filament's interior. The ATP-DnaA-oriC complex binds and stabilizes one strand of the AT-rich DNA unwinding element (DUE), permitting loading of DNA polymerase. After initiation quickly degrades to an ADP-DnaA complex that is not apt for DNA replication. Binds acidic phospholipids. The chain is Chromosomal replication initiator protein DnaA from Alkaliphilus metalliredigens (strain QYMF).